The chain runs to 235 residues: Urease accessory protein UreF (235 aa).

The protein belongs to the UreF family. In terms of assembly, ureD, UreF and UreG form a complex that acts as a GTP-hydrolysis-dependent molecular chaperone, activating the urease apoprotein by helping to assemble the nickel containing metallocenter of UreC. The UreE protein probably delivers the nickel.

It is found in the cytoplasm. Required for maturation of urease via the functional incorporation of the urease nickel metallocenter. In Ureaplasma urealyticum serovar 10 (strain ATCC 33699 / Western), this protein is Urease accessory protein UreF.